A 490-amino-acid polypeptide reads, in one-letter code: Betaine aldehyde dehydrogenase (490 aa).

K(+) contacts are provided by Ser-26, Ile-27, and Asp-93. 150-152 lines the NAD(+) pocket; that stretch reads GAW. Lys-162 (charge relay system) is an active-site residue. 176–179 lines the NAD(+) pocket; it reads KPSE. Val-180 lines the K(+) pocket. 230–233 is an NAD(+) binding site; it reads GVAT. Position 246 (Leu-246) interacts with K(+). Catalysis depends on Glu-252, which acts as the Proton acceptor. NAD(+)-binding residues include Gly-254, Cys-286, and Glu-387. Cys-286 (nucleophile) is an active-site residue. The residue at position 286 (Cys-286) is a Cysteine sulfenic acid (-SOH). Positions 457 and 460 each coordinate K(+). The Charge relay system role is filled by Glu-464.

The protein belongs to the aldehyde dehydrogenase family. In terms of assembly, dimer of dimers. The cofactor is K(+).

The catalysed reaction is betaine aldehyde + NAD(+) + H2O = glycine betaine + NADH + 2 H(+). Its pathway is amine and polyamine biosynthesis; betaine biosynthesis via choline pathway; betaine from betaine aldehyde: step 1/1. Functionally, involved in the biosynthesis of the osmoprotectant glycine betaine. Catalyzes the irreversible oxidation of betaine aldehyde to the corresponding acid. This chain is Betaine aldehyde dehydrogenase, found in Stutzerimonas stutzeri (strain A1501) (Pseudomonas stutzeri).